The chain runs to 306 residues: 33 kDa chaperonin (306 aa).

Intrachain disulfides connect Cys-242–Cys-244 and Cys-275–Cys-278.

Belongs to the HSP33 family. Under oxidizing conditions two disulfide bonds are formed involving the reactive cysteines. Under reducing conditions zinc is bound to the reactive cysteines and the protein is inactive.

The protein localises to the cytoplasm. Redox regulated molecular chaperone. Protects both thermally unfolding and oxidatively damaged proteins from irreversible aggregation. Plays an important role in the bacterial defense system toward oxidative stress. The sequence is that of 33 kDa chaperonin from Gloeobacter violaceus (strain ATCC 29082 / PCC 7421).